We begin with the raw amino-acid sequence, 412 residues long: Fringe glycosyltransferase (412 aa).

Topologically, residues 1–15 (MMSLTVLSPPQRFKR) are cytoplasmic. Residues 16–34 (ILQAMMLAVAVVYMTLLLY) form a helical; Signal-anchor for type II membrane protein membrane-spanning segment. Residues 35 to 412 (QSAYGYPGIQ…FPYFSFCPPR (378 aa)) are Lumenal-facing. A substrate-binding site is contributed by Arg164. Disulfide bonds link Cys204–Cys215 and Cys233–Cys297. Residue Asp237 participates in substrate binding. Asp238 is a binding site for Mn(2+). Asp327 is an active-site residue. His351 contributes to the Mn(2+) binding site. Cys400 and Cys409 are disulfide-bonded.

This sequence belongs to the glycosyltransferase 31 family. The cofactor is Mn(2+). Expressed in dorsal cells.

The protein localises to the golgi apparatus membrane. It catalyses the reaction 3-O-(alpha-L-fucosyl)-L-threonyl-[EGF-like domain protein] + UDP-N-acetyl-alpha-D-glucosamine = 3-O-(N-acetyl-beta-D-glucosaminyl-(1-&gt;3)-alpha-L-fucosyl)-L-threonyl-[EGF-like domain protein] + UDP + H(+). It carries out the reaction 3-O-(alpha-L-fucosyl)-L-seryl-[EGF-like domain protein] + UDP-N-acetyl-alpha-D-glucosamine = 3-O-(N-acetyl-beta-D-glucosaminyl-(1-&gt;3)-alpha-L-fucosyl)-L-seryl-[EGF-like domain protein] + UDP + H(+). Its function is as follows. Glycosyltransferase involved in the elongation of O-linked ligands to activate Notch signaling. Possesses fucose-specific beta-1,3-N-acetylglucosaminyltransferase activity; extends the O-linked fucose on the Notch EGF repeats. Boundary-specific cell-signaling molecule that is responsible for dorsal-ventral cell interactions during wing development. The chain is Fringe glycosyltransferase (fng) from Drosophila melanogaster (Fruit fly).